The following is a 287-amino-acid chain: 4-diphosphocytidyl-2-C-methyl-D-erythritol kinase (287 aa).

The active site involves lysine 12. 94–104 contributes to the ATP binding site; the sequence is PAQAGMGGGSS. Aspartate 136 is an active-site residue.

The protein belongs to the GHMP kinase family. IspE subfamily.

The catalysed reaction is 4-CDP-2-C-methyl-D-erythritol + ATP = 4-CDP-2-C-methyl-D-erythritol 2-phosphate + ADP + H(+). It functions in the pathway isoprenoid biosynthesis; isopentenyl diphosphate biosynthesis via DXP pathway; isopentenyl diphosphate from 1-deoxy-D-xylulose 5-phosphate: step 3/6. In terms of biological role, catalyzes the phosphorylation of the position 2 hydroxy group of 4-diphosphocytidyl-2C-methyl-D-erythritol. This Albidiferax ferrireducens (strain ATCC BAA-621 / DSM 15236 / T118) (Rhodoferax ferrireducens) protein is 4-diphosphocytidyl-2-C-methyl-D-erythritol kinase.